A 330-amino-acid polypeptide reads, in one-letter code: Putative glycosyltransferase ORF330 (330 aa).

The protein belongs to the glycosyltransferase group 1 family. Glycosyltransferase 4 subfamily.

This is Putative glycosyltransferase ORF330 from Acidianus filamentous virus 2 (isolate Italy/Pozzuoli) (AFV-2).